A 299-amino-acid chain; its full sequence is Coenzyme PQQ synthesis protein B (299 aa).

It belongs to the PqqB family.

Its pathway is cofactor biosynthesis; pyrroloquinoline quinone biosynthesis. May be involved in the transport of PQQ or its precursor to the periplasm. The chain is Coenzyme PQQ synthesis protein B from Xanthomonas oryzae pv. oryzae (strain MAFF 311018).